We begin with the raw amino-acid sequence, 82 residues long: U-actitoxin-Oulsp2 (82 aa).

Positions 1 to 21 are cleaved as a signal peptide; it reads MNTKLVVVFLLSAILFVSVTA. Positions 22–46 are excised as a propeptide; it reads SRPGKDLERDEAYETYDDERPYFKR. Residues 48 to 82 form the ShKT domain; it reads CKDNLPAATCSNVKANNNCSSEKYKTNCAKTCGEC. 3 disulfides stabilise this stretch: Cys-48–Cys-82, Cys-57–Cys-75, and Cys-66–Cys-79. The theoritically crucial for binding to potassium channels stretch occupies residues 70 to 71; sequence KY.

This sequence belongs to the sea anemone type 1 potassium channel toxin family. Type 1b subfamily.

The protein localises to the secreted. The protein resides in the nematocyst. Probable toxin with unknown function. In contrast to similar toxins, this toxin does not inhibit voltage-gated potassium channels (tested at 100 nM). Does not show antimicrobial activities against bacteria and yeasts. The polypeptide is U-actitoxin-Oulsp2 (Oulactis sp. (Sea anemone)).